Reading from the N-terminus, the 271-residue chain is MFSIQQPLLVFSDLDGTLLDSHSYDWQPTALWLSRLREANVPVILCSSKTSAEMLYLQKTLGLQGLPLIAENGAVIQLAEQWQDIDGFPRIISGISHGEISQVLNTLREKEHFKFTTFDDVDDATIAEWTGLSRSQAALTQLHEASVTLIWRDSDERMAQFTARLNELGLQFMQGARFWHVLDASAGKDQAANWIIATYQQLSGKRPTTLGLGDGPNDAPLLEVMDYAVIVKGLNREGVHLHDEDPTRVWRTQREGPEGWREGLDHFFSAR.

The Nucleophile role is filled by Asp-13. Mg(2+) is bound by residues Asp-13, Asp-15, and Asp-214.

It belongs to the HAD-like hydrolase superfamily. MPGP family. Mg(2+) serves as cofactor.

It localises to the cytoplasm. It catalyses the reaction 2-O-(alpha-D-mannosyl)-3-phosphoglycerate + H2O = (2R)-2-O-(alpha-D-mannosyl)-glycerate + phosphate. In Shigella sonnei (strain Ss046), this protein is Mannosyl-3-phosphoglycerate phosphatase (yedP).